A 314-amino-acid chain; its full sequence is Mitochondrial 2-oxoglutarate/malate carrier protein (314 aa).

Ala-2 bears the N-acetylalanine mark. Ser-6 is modified (phosphoserine). 3 Solcar repeats span residues 23–108, 117–208, and 217–306; these read VKFL…LFER, PGFL…SKQF, and DNIL…MNKA. Residues 24 to 42 form a helical membrane-spanning segment; the sequence is KFLFGGLAGMGATVFVQPL. Lys-57 carries the post-translational modification N6-succinyllysine. The residue at position 73 (Lys-73) is an N6-acetyllysine. A helical transmembrane segment spans residues 83–101; sequence GLSAGLLRQATYTTTRLGI. Residue Tyr-102 is modified to Phosphotyrosine. The next 3 helical transmembrane spans lie at 119-140, 183-202, and 222-240; these read FLLKAVIGMTAGATGAFVGTPA, GCIPTMARAVVVNAAQLASY, and HFCASMISGLVTTAASMPV. N6-acetyllysine is present on Lys-256. The helical transmembrane segment at 281-300 threads the bilayer; it reads GFTPYYARLGPHTVLTFIFL.

It belongs to the mitochondrial carrier (TC 2.A.29) family. In terms of assembly, interacts with SMIM26. In terms of tissue distribution, most highly expressed in the heart.

It localises to the mitochondrion inner membrane. It carries out the reaction (S)-malate(in) + 2-oxoglutarate(out) = (S)-malate(out) + 2-oxoglutarate(in). It catalyses the reaction malonate(in) + 2-oxoglutarate(out) = malonate(out) + 2-oxoglutarate(in). The catalysed reaction is succinate(in) + 2-oxoglutarate(out) = succinate(out) + 2-oxoglutarate(in). The enzyme catalyses maleate(in) + 2-oxoglutarate(out) = maleate(out) + 2-oxoglutarate(in). It carries out the reaction oxaloacetate(in) + 2-oxoglutarate(out) = oxaloacetate(out) + 2-oxoglutarate(in). In terms of biological role, catalyzes the transport of 2-oxoglutarate (alpha-oxoglutarate) across the inner mitochondrial membrane in an electroneutral exchange for malate. Can also exchange 2-oxoglutarate for other dicarboxylic acids such as malonate, succinate, maleate and oxaloacetate, although with lower affinity. Contributes to several metabolic processes, including the malate-aspartate shuttle, the oxoglutarate/isocitrate shuttle, in gluconeogenesis from lactate, and in nitrogen metabolism. Maintains mitochondrial fusion and fission events, and the organization and morphology of cristae. Involved in the regulation of apoptosis. Helps protect from cytotoxic-induced apoptosis by modulating glutathione levels in mitochondria. In Homo sapiens (Human), this protein is Mitochondrial 2-oxoglutarate/malate carrier protein (SLC25A11).